The sequence spans 1153 residues: uncharacterized protein (1153 aa).

Disordered stretches follow at residues 164-193, 224-245, 294-316, 332-427, 613-648, 683-703, 717-740, 772-819, 838-874, and 942-1106; these read TTIK…QIDD, DNYD…DDDK, KSPQ…QSKH, EHKL…KNKK, LSML…EGEN, QQQQ…EEMS, KSDD…SKRK, NKKL…KTIE, ASSG…EDEK, and NNNN…NNEV. Pro residues predominate over residues 169 to 179; the sequence is LPPPLPQPQPQ. Composition is skewed to low complexity over residues 231–240, 298–312, 336–391, and 399–423; these read NNNNNNNNSN, KLKL…QQQK, QQQQ…TPKK, and NNVN…NNNN. Positions 613-625 are enriched in polar residues; it reads LSMLDSTNDGSSQ. Residues 687–699 show a composition bias toward basic and acidic residues; the sequence is QEKEKQQQEKQQD. The span at 721 to 734 shows a compositional bias: low complexity; it reads NNNNNDNNNNNNNN. Over residues 772–784 the composition is skewed to basic and acidic residues; the sequence is NKKLRVDSEDQQT. Composition is skewed to low complexity over residues 788 to 808 and 839 to 854; these read TTTT…NNNN and SSGG…QNDS. Positions 856-874 are enriched in basic and acidic residues; it reads TTKEKERSETIKTHNEDEK. Low complexity predominate over residues 942–987; that stretch reads NNNNNNNNNINNINNIGNKNTTVNNSNHSNHSNNNINNNNIFKNSN. Polar residues-rich tracts occupy residues 988-998 and 1005-1015; these read PIVDTNFSSTT and QSKIFTGNQLP. The span at 1019 to 1059 shows a compositional bias: low complexity; sequence INNENVVNNNNNNEINNTTTTTTNNNSGIHKNNNNYNSDNS. Residues 1064 to 1081 show a composition bias toward basic and acidic residues; it reads DGLKQEKEEQKEEQKENK. The span at 1082–1105 shows a compositional bias: low complexity; it reads NNNNNNNNNNNNNNNNNNNNNNNE.

This is an uncharacterized protein from Dictyostelium discoideum (Social amoeba).